Reading from the N-terminus, the 220-residue chain is Pyridoxine/pyridoxamine 5'-phosphate oxidase (220 aa).

FMN-binding positions include 49 to 54, 68 to 69, Lys-75, and Gln-97; these read RMVLLK and YT. Residue Lys-54 participates in substrate binding. Substrate is bound by residues Tyr-115, Arg-119, and Ser-123. Residues 132–133 and Trp-176 contribute to the FMN site; that span reads QS. A substrate-binding site is contributed by 182–184; it reads RLH. Arg-186 contributes to the FMN binding site.

The protein belongs to the pyridoxamine 5'-phosphate oxidase family. Homodimer. FMN serves as cofactor.

It catalyses the reaction pyridoxamine 5'-phosphate + O2 + H2O = pyridoxal 5'-phosphate + H2O2 + NH4(+). The catalysed reaction is pyridoxine 5'-phosphate + O2 = pyridoxal 5'-phosphate + H2O2. The protein operates within cofactor metabolism; pyridoxal 5'-phosphate salvage; pyridoxal 5'-phosphate from pyridoxamine 5'-phosphate: step 1/1. It functions in the pathway cofactor metabolism; pyridoxal 5'-phosphate salvage; pyridoxal 5'-phosphate from pyridoxine 5'-phosphate: step 1/1. Its function is as follows. Catalyzes the oxidation of either pyridoxine 5'-phosphate (PNP) or pyridoxamine 5'-phosphate (PMP) into pyridoxal 5'-phosphate (PLP). The chain is Pyridoxine/pyridoxamine 5'-phosphate oxidase from Paracoccus denitrificans (strain Pd 1222).